Consider the following 366-residue polypeptide: Chorismate synthase (366 aa).

NADP(+)-binding residues include R48 and R54. FMN contacts are provided by residues 125–127 (RSS), 238–239 (NA), G278, 293–297 (KPTSS), and R319.

This sequence belongs to the chorismate synthase family. As to quaternary structure, homotetramer. The cofactor is FMNH2.

The enzyme catalyses 5-O-(1-carboxyvinyl)-3-phosphoshikimate = chorismate + phosphate. The protein operates within metabolic intermediate biosynthesis; chorismate biosynthesis; chorismate from D-erythrose 4-phosphate and phosphoenolpyruvate: step 7/7. Catalyzes the anti-1,4-elimination of the C-3 phosphate and the C-6 proR hydrogen from 5-enolpyruvylshikimate-3-phosphate (EPSP) to yield chorismate, which is the branch point compound that serves as the starting substrate for the three terminal pathways of aromatic amino acid biosynthesis. This reaction introduces a second double bond into the aromatic ring system. This Methylococcus capsulatus (strain ATCC 33009 / NCIMB 11132 / Bath) protein is Chorismate synthase.